Consider the following 276-residue polypeptide: Tumor necrosis factor-inducible gene 6 protein (276 aa).

A signal peptide spans 1-17 (MIILIYLFVLVWEEAQG). Positions 36 to 129 (GVYHREARSG…SERWDAYCYN (94 aa)) constitute a Link domain. 3 cysteine pairs are disulfide-bonded: C58-C127, C82-C103, and C135-C161. A glycan (N-linked (GlcNAc...) asparagine) is linked at N118. The region spanning 135 to 247 (CGGVFTDPKR…GGFQIKYVTV (113 aa)) is the CUB domain. The Ca(2+) site is built by E183, D191, D232, S234, and V235. The cysteines at positions 188 and 210 are disulfide-linked. N-linked (GlcNAc...) asparagine glycosylation occurs at N258.

In terms of assembly, interacts (via Link domain) with inter-alpha-inhibitor (I-alpha-I) component bikunin. Interacts with ITIH2/HC2; this interaction is required for transesterification of the HC to hyaluronan. Interacts (via Link and CUB domains) with ITIH1. Chondroitin sulfate may be required for the stability of the complex. Interacts (via Link domain) with various C-X-C and C-C chemokines including PF4, CXCL8, CXCL11, CXCL12, CCL2, CCL7, CCL19, CCL21, and CCL27; this interaction interferes with chemokine binding to glycosaminoglycans. Interacts (primarily via Link domain) with BMP2; this interaction is inhibited by hyaluronan. Interacts (via both Link and CUB domains) with TNFSF11. Interacts (via CUB domain) with FN1 (via type III repeats 9-14); this interaction enhances fibronectin fibril assembly. TNFAIP6 may act as a bridging molecule between FN1 and THBS1. In terms of tissue distribution, vascular smooth muscle cells.

Its subcellular location is the secreted. Its function is as follows. Major regulator of extracellular matrix organization during tissue remodeling. Catalyzes the transfer of a heavy chain (HC) from inter-alpha-inhibitor (I-alpha-I) complex to hyaluronan. Cleaves the ester bond between the C-terminus of the HC and GalNAc residue of the chondroitin sulfate chain in I-alpha-I complex followed by transesterification of the HC to hyaluronan. In the process, potentiates the antiprotease function of I-alpha-I complex through release of free bikunin. Acts as a catalyst in the formation of hyaluronan-HC oligomers and hyaluronan-rich matrix surrounding the cumulus cell-oocyte complex, a necessary step for oocyte fertilization. Assembles hyaluronan in pericellular matrices that serve as platforms for receptor clustering and signaling. Enables binding of hyaluronan deposited on the surface of macrophages to LYVE1 on lymphatic endothelium and facilitates macrophage extravasation. Alters hyaluronan binding to functionally latent CD44 on vascular endothelium, switching CD44 into an active state that supports leukocyte rolling. Modulates the interaction of chemokines with extracellular matrix components and proteoglycans on endothelial cell surface, likely preventing chemokine gradient formation. In a negative feedback mechanism, may limit excessive neutrophil recruitment at inflammatory sites by antagonizing the association of CXCL8 with glycosaminoglycans on vascular endothelium. Has a role in osteogenesis and bone remodeling. Inhibits BMP2-dependent differentiation of mesenchymal stem cell to osteoblasts. Protects against bone erosion during inflammation by inhibiting TNFSF11/RANKL-dependent osteoclast activation. The protein is Tumor necrosis factor-inducible gene 6 protein (TNFAIP6) of Oryctolagus cuniculus (Rabbit).